Here is a 746-residue protein sequence, read N- to C-terminus: H(+)/Cl(-) exchange transporter 5 (746 aa).

The Cytoplasmic portion of the chain corresponds to 1 to 54; sequence MDFLEEPIPGVGTYDDFNTIDWVREKSRDRDRHREITNRSKESTWALIHSVSDA. 2 helical membrane-spanning segments follow: residues 55 to 92 and 138 to 161; these read FSGW…ICTE and VNYF…VKVF. Residues 167-171 carry the Selectivity filter part_1 motif; the sequence is GSGIP. Serine 168 provides a ligand contact to chloride. An intramembrane region (helical) is located at residues 170 to 177; the sequence is IPEIKTIL. The next 2 helical transmembrane spans lie at 186–205 and 211–230; these read LGKW…VSSG and EGPL…HCFN. The short motif at 209-213 is the Selectivity filter part_2 element; sequence GKEGP. 2 consecutive intramembrane regions (helical) follow at residues 242 to 254 and 258 to 266; these read VLSA…VSVA and PIGGVLFSL. A run of 5 helical transmembrane segments spans residues 278–296, 319–344, 352–372, 428–448, and 453–472; these read LWRS…RSIN, LVPF…IAWC, LGKY…ILAF, MWQL…TFGM, and GLFI…LGVG. Positions 453-457 match the Selectivity filter part_3 motif; sequence GLFIP. Phenylalanine 455 contributes to the chloride binding site. The segment at residues 500–514 is an intramembrane region (helical); that stretch reads GLYAMVGAAACLGGV. The note=Loop between two helices intramembrane region spans 515–517; it reads TRM. The helical intramembrane region spans 518–529; that stretch reads TVSLVVIMFELT. The segment at residues 530 to 534 is an intramembrane region (note=Loop between two helices); it reads GGLEY. The helical transmembrane segment at 535-552 threads the bilayer; it reads IVPLMAAAMTSKWVADAL. Over 553 to 746 the chain is Cytoplasmic; it reads GREGIYDAHI…NQDPDSILFN (194 aa). Position 558 (tyrosine 558) interacts with chloride. 2 CBS domains span residues 586–650 and 682–742; these read MKPR…ARKE and ILDL…DPDS. Residues threonine 596, 617–619, and 724–727 each bind ATP; these read YSG and TKKD.

Belongs to the chloride channel (TC 2.A.49) family. ClC-5/CLCN5 subfamily. Interacts with NEDD4 and NEDD4L. Ubiquitinated by NEDD4L in the presence of albumin; which promotes endocytosis and proteasomal degradation. As to expression, detected in duodenum, jejunum and ileum. Detected in crypt and villus regions of the epithelium of the small intestine.

It is found in the golgi apparatus membrane. Its subcellular location is the endosome membrane. The protein localises to the cell membrane. The enzyme catalyses 2 chloride(in) + H(+)(out) = 2 chloride(out) + H(+)(in). In terms of biological role, proton-coupled chloride transporter. Functions as antiport system and exchanges chloride ions against protons. Important for normal acidification of the endosome lumen. May play an important role in renal tubular function. The CLC channel family contains both chloride channels and proton-coupled anion transporters that exchange chloride or another anion for protons. The absence of conserved gating glutamate residues is typical for family members that function as channels. The chain is H(+)/Cl(-) exchange transporter 5 (CLCN5) from Cavia porcellus (Guinea pig).